The primary structure comprises 317 residues: Pantothenate kinase (317 aa).

An ATP-binding site is contributed by 101 to 108; it reads GSVAVGKS.

It belongs to the prokaryotic pantothenate kinase family.

It is found in the cytoplasm. The catalysed reaction is (R)-pantothenate + ATP = (R)-4'-phosphopantothenate + ADP + H(+). Its pathway is cofactor biosynthesis; coenzyme A biosynthesis; CoA from (R)-pantothenate: step 1/5. The protein is Pantothenate kinase of Actinobacillus succinogenes (strain ATCC 55618 / DSM 22257 / CCUG 43843 / 130Z).